The chain runs to 368 residues: snRNA-activating protein complex subunit 1 (368 aa).

Positions 1–168 are SNAPC3-binding; it reads MGTPPGLQTD…EEFKDPSDRV (168 aa). The tract at residues 164-268 is SNAPC4-binding; it reads PSDRVMKLIT…AESLAKIKSK (105 aa). Disordered regions lie at residues 224 to 257 and 275 to 368; these read QQWH…ERCE and QASK…RRKH. Basic and acidic residues predominate over residues 238–257; it reads KTNDGEEKMEGNSQETERCE. A phosphoserine mark is found at serine 289 and serine 290.

In terms of assembly, part of the SNAPc complex composed of 5 subunits: SNAPC1, SNAPC2, SNAPC3, SNAPC4 and SNAPC5. SNAPC1 interacts with SNAPC3, SNAPC4 and TBP.

It is found in the nucleus. Its function is as follows. Part of the SNAPc complex required for the transcription of both RNA polymerase II and III small-nuclear RNA genes. Binds to the proximal sequence element (PSE), a non-TATA-box basal promoter element common to these 2 types of genes. Recruits TBP and BRF2 to the U6 snRNA TATA box. The protein is snRNA-activating protein complex subunit 1 (SNAPC1) of Homo sapiens (Human).